The chain runs to 91 residues: Small integral membrane protein 13 (91 aa).

A helical membrane pass occupies residues 10-30; sequence LVFVATLLIVLLLMVCGWYFV. A disordered region spans residues 47 to 91; sequence DTGSQEGDHEPSGSETEEDTSSSPHRIRSARQRRAPADEGHRPLT. Phosphoserine occurs at positions 58 and 60. Thr-62 carries the post-translational modification Phosphothreonine. Ser-69 carries the post-translational modification Phosphoserine. Residues 71 to 80 are compositionally biased toward basic residues; that stretch reads HRIRSARQRR. The span at 81–91 shows a compositional bias: basic and acidic residues; that stretch reads APADEGHRPLT.

This sequence belongs to the SMIM13 family.

The protein resides in the membrane. The chain is Small integral membrane protein 13 (SMIM13) from Homo sapiens (Human).